Reading from the N-terminus, the 180-residue chain is ATP synthase subunit delta (180 aa).

This sequence belongs to the ATPase delta chain family. As to quaternary structure, F-type ATPases have 2 components, F(1) - the catalytic core - and F(0) - the membrane proton channel. F(1) has five subunits: alpha(3), beta(3), gamma(1), delta(1), epsilon(1). F(0) has three main subunits: a(1), b(2) and c(10-14). The alpha and beta chains form an alternating ring which encloses part of the gamma chain. F(1) is attached to F(0) by a central stalk formed by the gamma and epsilon chains, while a peripheral stalk is formed by the delta and b chains.

It is found in the cell inner membrane. Functionally, f(1)F(0) ATP synthase produces ATP from ADP in the presence of a proton or sodium gradient. F-type ATPases consist of two structural domains, F(1) containing the extramembraneous catalytic core and F(0) containing the membrane proton channel, linked together by a central stalk and a peripheral stalk. During catalysis, ATP synthesis in the catalytic domain of F(1) is coupled via a rotary mechanism of the central stalk subunits to proton translocation. Its function is as follows. This protein is part of the stalk that links CF(0) to CF(1). It either transmits conformational changes from CF(0) to CF(1) or is implicated in proton conduction. This is ATP synthase subunit delta from Geotalea uraniireducens (strain Rf4) (Geobacter uraniireducens).